Reading from the N-terminus, the 254-residue chain is Phosphoglycerate mutase 1 (254 aa).

Substrate-binding positions include 10–17 and 23–24; these read RHGESAWN and SG. His11 acts as the Tele-phosphohistidine intermediate in catalysis. Phosphoserine occurs at positions 14 and 23. Tyr26 carries the phosphotyrosine modification. Position 31 is a phosphoserine (Ser31). Residues Arg62, 89–92, and Lys100 each bind substrate; that span reads ERHY. Glu89 acts as the Proton donor/acceptor in catalysis. Lys106 carries the N6-acetyllysine modification. Substrate is bound at residue 116–117; it reads RR. At Ser118 the chain carries Phosphoserine. 187–188 provides a ligand contact to substrate; the sequence is GN. Lys251 is subject to N6-acetyllysine; alternate. The residue at position 251 (Lys251) is an N6-succinyllysine; alternate. Lys253 and Lys254 each carry N6-acetyllysine.

Belongs to the phosphoglycerate mutase family. BPG-dependent PGAM subfamily. As to quaternary structure, homodimer. Acetylated at Lys-253, Lys-253 and Lys-254 under high glucose condition. Acetylation increases catalytic activity. Under glucose restriction SIRT1 levels dramatically increase and it deacetylates the enzyme.

It carries out the reaction (2R)-2-phosphoglycerate = (2R)-3-phosphoglycerate. The enzyme catalyses (2R)-3-phospho-glyceroyl phosphate = (2R)-2,3-bisphosphoglycerate + H(+). Catalyzes the interconversion of 2-phosphoglycerate and 3-phosphoglyceratea crucial step in glycolysis, by using 2,3-bisphosphoglycerate. Also catalyzes the interconversion of (2R)-2,3-bisphosphoglycerate and (2R)-3-phospho-glyceroyl phosphate. The chain is Phosphoglycerate mutase 1 from Mus musculus (Mouse).